The primary structure comprises 657 residues: L-type lectin-domain containing receptor kinase I.8 (657 aa).

Positions 1–23 (MAPGLDLIWMVISFLLLIHLSSQ) are cleaved as a signal peptide. Over 24 to 282 (QETGFSFNGF…QVPHPKMKTS (259 aa)) the chain is Extracellular. Residues 25–257 (ETGFSFNGFR…NHYILGWSFS (233 aa)) form a legume-lectin like region. 5 N-linked (GlcNAc...) asparagine glycosylation sites follow: Asn-74, Asn-124, Asn-181, Asn-204, and Asn-225. A helical membrane pass occupies residues 283 to 303 (LLLILLLIVLGIILLVLLVGA). The Cytoplasmic segment spans residues 304 to 657 (YLYRRNKYAE…THSIQYGIGR (354 aa)). One can recognise a Protein kinase domain in the interval 339–611 (FHKDGFLGKG…VQYLDRQVSL (273 aa)). ATP contacts are provided by residues 345–353 (LGKGGFGEV) and Lys-366. Asp-462 serves as the catalytic Proton acceptor.

This sequence in the C-terminal section; belongs to the protein kinase superfamily. Ser/Thr protein kinase family. The protein in the N-terminal section; belongs to the leguminous lectin family.

It is found in the cell membrane. The catalysed reaction is L-seryl-[protein] + ATP = O-phospho-L-seryl-[protein] + ADP + H(+). The enzyme catalyses L-threonyl-[protein] + ATP = O-phospho-L-threonyl-[protein] + ADP + H(+). Its function is as follows. Involved in resistance response to the pathogenic fungus Alternaria brassicicola. The protein is L-type lectin-domain containing receptor kinase I.8 of Arabidopsis thaliana (Mouse-ear cress).